We begin with the raw amino-acid sequence, 156 residues long: Ribosome maturation factor RimP (156 aa).

The protein belongs to the RimP family.

It is found in the cytoplasm. Functionally, required for maturation of 30S ribosomal subunits. This is Ribosome maturation factor RimP from Prochlorococcus marinus (strain NATL1A).